A 190-amino-acid chain; its full sequence is Vascular endothelial growth factor A (190 aa).

Residues 1–26 (MNFLLSWVHWSLALLLYLHHAKWSQA) form the signal peptide. 3 disulfides stabilise this stretch: C51/C93, C82/C127, and C86/C129. N-linked (GlcNAc...) asparagine glycosylation is present at N100.

Belongs to the PDGF/VEGF growth factor family. In terms of assembly, homodimer; disulfide-linked. Also found as heterodimer with PGF. Interacts with NRP1. Interacts with isoform 2 of BSG. Interacts with CD82; this interaction inhibits VEGFA-mediated signaling pathway.

It is found in the secreted. Functionally, growth factor active in angiogenesis, vasculogenesis and endothelial cell growth. Induces endothelial cell proliferation, promotes cell migration, inhibits apoptosis and induces permeabilization of blood vessels. Binds to the FLT1/VEGFR1 and KDR/VEGFR2 receptors, heparan sulfate and heparin. Binding to NRP1 receptor initiates a signaling pathway needed for motor neuron axon guidance and cell body migration, including for the caudal migration of facial motor neurons from rhombomere 4 to rhombomere 6 during embryonic development. Also binds the DEAR/FBXW7-AS1 receptor. This Equus caballus (Horse) protein is Vascular endothelial growth factor A (VEGFA).